The primary structure comprises 91 residues: Acylphosphatase (91 aa).

One can recognise an Acylphosphatase-like domain in the interval 3–89 (TLLVRISGKV…PDQPGFSQKP (87 aa)). Active-site residues include R18 and N36.

Belongs to the acylphosphatase family.

It carries out the reaction an acyl phosphate + H2O = a carboxylate + phosphate + H(+). This chain is Acylphosphatase (acyP), found in Rhodospirillum rubrum (strain ATCC 11170 / ATH 1.1.1 / DSM 467 / LMG 4362 / NCIMB 8255 / S1).